The following is a 514-amino-acid chain: Protein translocase subunit SecD (514 aa).

A run of 5 helical transmembrane segments spans residues 7–27 (WKIFLSIICTIFAVICALPNF), 357–377 (IIGFAAVCIFMVWSYGLLGLF), 389–409 (VLALLSLFQATLTLPGIAGII), 448–470 (FATILDSNLTTLIVAFLLYIFGV), and 482–502 (IGIISSMFSAIIITKLLIDIW).

It belongs to the SecD/SecF family. SecD subfamily. Forms a complex with SecF. Part of the essential Sec protein translocation apparatus which comprises SecA, SecYEG and auxiliary proteins SecDF-YajC and YidC.

Its subcellular location is the cell inner membrane. In terms of biological role, part of the Sec protein translocase complex. Interacts with the SecYEG preprotein conducting channel. SecDF uses the proton motive force (PMF) to complete protein translocation after the ATP-dependent function of SecA. This is Protein translocase subunit SecD from Rickettsia bellii (strain RML369-C).